The sequence spans 78 residues: Small ribosomal subunit protein uS17 (78 aa).

This sequence belongs to the universal ribosomal protein uS17 family. Part of the 30S ribosomal subunit.

One of the primary rRNA binding proteins, it binds specifically to the 5'-end of 16S ribosomal RNA. This chain is Small ribosomal subunit protein uS17, found in Parvibaculum lavamentivorans (strain DS-1 / DSM 13023 / NCIMB 13966).